The chain runs to 204 residues: Small ribosomal subunit protein uS7 (204 aa).

Position 1 is an N-acetylmethionine (Met-1). N-acetylthreonine; in 40S ribosomal protein S5, N-terminally processed is present on Thr-2. Thr-14 is modified (phosphothreonine). Position 47 is an N6-acetyllysine; alternate (Lys-47). Residue Lys-47 forms a Glycyl lysine isopeptide (Lys-Gly) (interchain with G-Cter in SUMO2); alternate linkage. Ser-142 is subject to Phosphoserine.

Belongs to the universal ribosomal protein uS7 family. In terms of assembly, component of the small ribosomal subunit. Part of the small subunit (SSU) processome, composed of more than 70 proteins and the RNA chaperone small nucleolar RNA (snoRNA) U3.

Its subcellular location is the cytoplasm. The protein resides in the nucleus. It localises to the nucleolus. Component of the small ribosomal subunit. The ribosome is a large ribonucleoprotein complex responsible for the synthesis of proteins in the cell. Part of the small subunit (SSU) processome, first precursor of the small eukaryotic ribosomal subunit. During the assembly of the SSU processome in the nucleolus, many ribosome biogenesis factors, an RNA chaperone and ribosomal proteins associate with the nascent pre-rRNA and work in concert to generate RNA folding, modifications, rearrangements and cleavage as well as targeted degradation of pre-ribosomal RNA by the RNA exosome. The sequence is that of Small ribosomal subunit protein uS7 (Rps5) from Rattus norvegicus (Rat).